Consider the following 575-residue polypeptide: E3 ubiquitin-protein ligase IpaH1.4 (575 aa).

The interaction with target proteins stretch occupies residues 1–270 (MIKSTNIQAI…PDYSGPQIFF (270 aa)). LRR repeat units lie at residues 69–90 (LQNQ…PDLP), 91–115 (PQIT…MLKV), 117–130 (HAQF…PALP), 131–150 (ETLE…PFLP), 151–170 (ENLT…PLLP), 171–195 (PELK…KLEG), 197–209 (ALAN…LPEL), and 210–233 (PFSM…VLRL). The tract at residues 271–281 (SMGNSATISAP) is linker. An E3 ubiquitin-protein ligase catalytic domain region spans residues 282–575 (EHSLADAVTA…LSENGSNHIA (294 aa)). The 292-residue stretch at 284 to 575 (SLADAVTAWF…LSENGSNHIA (292 aa)) folds into the NEL domain. Residue C368 is the Glycyl thioester intermediate of the active site.

Belongs to the LRR-containing bacterial E3 ligase family. Interacts with human RBCK1/HOIL-1 and RNF31/HOIP components of the LUBAC complex. Ubiquitinated in the presence of host E1 ubiquitin-activating enzyme, E2 ubiquitin-conjugating enzyme and ubiquitin.

The protein resides in the secreted. Its subcellular location is the host cytoplasm. The catalysed reaction is S-ubiquitinyl-[E2 ubiquitin-conjugating enzyme]-L-cysteine + [acceptor protein]-L-lysine = [E2 ubiquitin-conjugating enzyme]-L-cysteine + N(6)-ubiquitinyl-[acceptor protein]-L-lysine.. The protein operates within protein modification; protein ubiquitination. With respect to regulation, exists in an autoinhibited state in the absence of substrate protein, probably due to interactions of the leucine-rich repeat domain with the catalytic domain. Is activated upon binding to a substrate protein. E3 ubiquitin-protein ligase effector that inhibits host cell innate immunity during bacterial infection by catalyzing 'Lys-48'-linked polyubiquitination and subsequent degradation of host RNF31/HOIP and RBCK1/HOIL-1. Host RNF31/HOIP is the catalytic component of the LUBAC complex, which conjugates linear ('Met-1'-linked) polyubiquitin chains at the surface of bacteria invading the host cytosol to form the ubiquitin coat surrounding bacteria. The bacterial ubiquitin coat acts as an 'eat-me' signal for xenophagy and promotes NF-kappa-B activation. By promoting degradation of host RNF31/HOIP, IpaH1.4 prevents formation of the bacterial ubiquitin coat and activation of host cell innate immunity. The sequence is that of E3 ubiquitin-protein ligase IpaH1.4 from Shigella flexneri.